The sequence spans 144 residues: 3-hydroxyacyl-[acyl-carrier-protein] dehydratase FabZ (144 aa).

His-47 is a catalytic residue.

This sequence belongs to the thioester dehydratase family. FabZ subfamily.

It is found in the cytoplasm. It carries out the reaction a (3R)-hydroxyacyl-[ACP] = a (2E)-enoyl-[ACP] + H2O. Involved in unsaturated fatty acids biosynthesis. Catalyzes the dehydration of short chain beta-hydroxyacyl-ACPs and long chain saturated and unsaturated beta-hydroxyacyl-ACPs. This chain is 3-hydroxyacyl-[acyl-carrier-protein] dehydratase FabZ, found in Dechloromonas aromatica (strain RCB).